Here is a 278-residue protein sequence, read N- to C-terminus: Orotidine 5'-phosphate decarboxylase (278 aa).

Substrate is bound by residues Asp-40, Lys-62–His-64, Asp-93–Thr-102, Tyr-223, and Arg-242. The active-site Proton donor is Lys-95.

It belongs to the OMP decarboxylase family.

It catalyses the reaction orotidine 5'-phosphate + H(+) = UMP + CO2. Its pathway is pyrimidine metabolism; UMP biosynthesis via de novo pathway; UMP from orotate: step 2/2. The chain is Orotidine 5'-phosphate decarboxylase (URA1) from Schizophyllum commune (Split gill fungus).